Reading from the N-terminus, the 157-residue chain is SsrA-binding protein (157 aa).

Residues 132–157 are disordered; the sequence is VHDKRQAQKDKDWAREKDRLFKKAYK. Basic and acidic residues predominate over residues 135–157; that stretch reads KRQAQKDKDWAREKDRLFKKAYK.

This sequence belongs to the SmpB family.

The protein localises to the cytoplasm. Functionally, required for rescue of stalled ribosomes mediated by trans-translation. Binds to transfer-messenger RNA (tmRNA), required for stable association of tmRNA with ribosomes. tmRNA and SmpB together mimic tRNA shape, replacing the anticodon stem-loop with SmpB. tmRNA is encoded by the ssrA gene; the 2 termini fold to resemble tRNA(Ala) and it encodes a 'tag peptide', a short internal open reading frame. During trans-translation Ala-aminoacylated tmRNA acts like a tRNA, entering the A-site of stalled ribosomes, displacing the stalled mRNA. The ribosome then switches to translate the ORF on the tmRNA; the nascent peptide is terminated with the 'tag peptide' encoded by the tmRNA and targeted for degradation. The ribosome is freed to recommence translation, which seems to be the essential function of trans-translation. The protein is SsrA-binding protein of Francisella tularensis subsp. tularensis (strain FSC 198).